We begin with the raw amino-acid sequence, 131 residues long: Small ribosomal subunit protein uS9 (131 aa).

Belongs to the universal ribosomal protein uS9 family.

This Actinobacillus pleuropneumoniae serotype 7 (strain AP76) protein is Small ribosomal subunit protein uS9.